An 843-amino-acid polypeptide reads, in one-letter code: Protein PLASTID MOVEMENT IMPAIRED 1 (843 aa).

The span at 30-58 (PQVSVGNRRTNSLALPRSSVPSLVTSADE) shows a compositional bias: polar residues. 2 disordered regions span residues 30 to 65 (PQVS…ARAE) and 88 to 116 (LEVE…SGVK). Residues 131–284 (LVRIGMQKLS…ELALKLGFQI (154 aa)) form the C2 NT-type domain. Disordered regions lie at residues 300–412 (FGMK…GTIG) and 450–472 (MMKD…EEEQ). Polar residues predominate over residues 307 to 336 (KPKNFANSFGRKQSKTSFSVPSPKMTSRSE). A phosphoserine mark is found at serine 314 and serine 328. Residues 365 to 381 (PEEKPVQKNDKPEQRAE) show a composition bias toward basic and acidic residues. Position 404 is a phosphothreonine (threonine 404). Serine 407 carries the phosphoserine modification. Threonine 410 carries the phosphothreonine modification. Over residues 456–472 (DGGDGETESQRLDEEEQ) the composition is skewed to acidic residues. Serine 507 carries the phosphoserine modification.

In terms of tissue distribution, expressed in leaves, stems, cauline leaves, and flowers but not in roots. Present in leaves in both mesophyll and pavement cells.

It is found in the cytoplasm. In terms of biological role, necessary for chloroplast and nuclear photorelocation movements via the regulation of chloroplast-actin (cp-actin) filaments in mesophyll cells, and together with PMIR1, in pavement cells. Required component for both the low- and high-light-dependent chloroplast movement responses via an abscisic acid (ABA) pathway. Involved in the ABA response pathway during seed germination. Modulates ABA accumulation during periods of water deficit at the seedling stage. The polypeptide is Protein PLASTID MOVEMENT IMPAIRED 1 (Arabidopsis thaliana (Mouse-ear cress)).